A 315-amino-acid chain; its full sequence is D-alanine--D-alanine ligase B (315 aa).

The ATP-grasp domain occupies K109–E309. An ATP-binding site is contributed by P135–T190. D259, E276, and N278 together coordinate Mg(2+).

It belongs to the D-alanine--D-alanine ligase family. Mg(2+) is required as a cofactor. Requires Mn(2+) as cofactor.

Its subcellular location is the cytoplasm. The enzyme catalyses 2 D-alanine + ATP = D-alanyl-D-alanine + ADP + phosphate + H(+). It functions in the pathway cell wall biogenesis; peptidoglycan biosynthesis. In terms of biological role, cell wall formation. In Brucella melitensis biotype 1 (strain ATCC 23456 / CCUG 17765 / NCTC 10094 / 16M), this protein is D-alanine--D-alanine ligase B.